We begin with the raw amino-acid sequence, 557 residues long: uncharacterized protein (557 aa).

Residues 2–45 adopt a coiled-coil conformation; sequence NEDETSILNKKMEKIEVEMAEFERLGAEREKEAVERIVQEENQN. Disordered regions lie at residues 39 to 62, 101 to 127, 356 to 402, and 536 to 557; these read VQEE…KSRK, NRTY…RKNF, PSPS…YPSN, and ANAT…YDHI. Polar residues-rich tracts occupy residues 101 to 110, 358 to 380, 390 to 400, and 536 to 548; these read NRTYYKNSQG, PSFQ…SSNA, DSATYPTSIYP, and ANAT…NLDT.

It is found in the cytoplasm. It localises to the nucleus. This is an uncharacterized protein from Schizosaccharomyces pombe (strain 972 / ATCC 24843) (Fission yeast).